A 123-amino-acid chain; its full sequence is Large ribosomal subunit protein bL20 (123 aa).

Belongs to the bacterial ribosomal protein bL20 family.

Its function is as follows. Binds directly to 23S ribosomal RNA and is necessary for the in vitro assembly process of the 50S ribosomal subunit. It is not involved in the protein synthesizing functions of that subunit. This Ehrlichia ruminantium (strain Gardel) protein is Large ribosomal subunit protein bL20.